Here is a 187-residue protein sequence, read N- to C-terminus: Acireductone dioxygenase (187 aa).

Fe(2+)-binding residues include histidine 87, histidine 89, glutamate 93, and histidine 136. Residues histidine 87, histidine 89, glutamate 93, and histidine 136 each coordinate Ni(2+).

It belongs to the acireductone dioxygenase (ARD) family. The cofactor is Fe(2+). Requires Ni(2+) as cofactor.

The protein resides in the cytoplasm. The protein localises to the nucleus. The catalysed reaction is 1,2-dihydroxy-5-(methylsulfanyl)pent-1-en-3-one + O2 = 4-methylsulfanyl-2-oxobutanoate + formate + 2 H(+). The enzyme catalyses 1,2-dihydroxy-5-(methylsulfanyl)pent-1-en-3-one + O2 = 3-(methylsulfanyl)propanoate + CO + formate + 2 H(+). It functions in the pathway amino-acid biosynthesis; L-methionine biosynthesis via salvage pathway; L-methionine from S-methyl-5-thio-alpha-D-ribose 1-phosphate: step 5/6. Catalyzes 2 different reactions between oxygen and the acireductone 1,2-dihydroxy-3-keto-5-methylthiopentene (DHK-MTPene) depending upon the metal bound in the active site. Fe-containing acireductone dioxygenase (Fe-ARD) produces formate and 2-keto-4-methylthiobutyrate (KMTB), the alpha-ketoacid precursor of methionine in the methionine recycle pathway. Ni-containing acireductone dioxygenase (Ni-ARD) produces methylthiopropionate, carbon monoxide and formate, and does not lie on the methionine recycle pathway. The sequence is that of Acireductone dioxygenase from Cryptococcus neoformans var. neoformans serotype D (strain JEC21 / ATCC MYA-565) (Filobasidiella neoformans).